We begin with the raw amino-acid sequence, 379 residues long: Forkhead box protein F1 (379 aa).

The interval 1–45 (MSSAPEKQQPPHGGGGGGGGGGGAAMDPASSGPSKAKKTNAGIRR) is disordered. Over residues 12 to 24 (HGGGGGGGGGGGA) the composition is skewed to gly residues. A DNA-binding region (fork-head) is located at residues 47-138 (EKPPYSYIAL…EFMFEEGSFR (92 aa)).

As to expression, expressed in lung and placenta.

The protein localises to the nucleus. Functionally, probable transcription activator for a number of lung-specific genes. The sequence is that of Forkhead box protein F1 (FOXF1) from Homo sapiens (Human).